The chain runs to 158 residues: Protein Smg homolog (158 aa).

It belongs to the Smg family.

The chain is Protein Smg homolog from Vibrio cholerae serotype O1 (strain ATCC 39315 / El Tor Inaba N16961).